The chain runs to 433 residues: MIVGLTLYFVLFRSIQYLLVFLTPIRQFDTSTSLLLNELCSSPSEINSYWNKYFWNKLLSWDSVFFIKNITSKNGKPQFEHEYAFSQLWTFFVRLFIKSNNDSIYHALRVGVAIENVLFYLSGIVLYFLTKKIFSQNIRQSQFARTIAKKTSLLFFLTSAAGFLTSIYSEPLSFFFAFVGIWSRECSISVPVLGQFDISWRYWFPYSFISMACFTLASLNRSNCVLLGIYFIFDLIELTKNRKFVKAICFPLLSGSLMFSALLYQQYYLPYKTFCPQRGEWCKSQLFSSIFITKTSLYSYIQSHYWGVGLLKYWTPNNIPNFLFAVPNIIILIYSSIYFSKIYPSYNLKALVWITRALVVIVCFFAHVQILNRIASFLPLHLWYLADRLVKTSDPKKMENPKGDDKIVKFYIYWLAFWIPLQTILFAAFLPPA.

Residue M1 is a topological domain, cytoplasmic. A helical membrane pass occupies residues 2-22 (IVGLTLYFVLFRSIQYLLVFL). At 23–109 (TPIRQFDTST…NNDSIYHALR (87 aa)) the chain is on the lumenal side. 2 N-linked (GlcNAc...) asparagine glycosylation sites follow: N69 and N101. The helical transmembrane segment at 110–130 (VGVAIENVLFYLSGIVLYFLT) threads the bilayer. Residues 131–161 (KKIFSQNIRQSQFARTIAKKTSLLFFLTSAA) lie on the Cytoplasmic side of the membrane. The chain crosses the membrane as a helical span at residues 162–182 (GFLTSIYSEPLSFFFAFVGIW). The Lumenal portion of the chain corresponds to 183–215 (SRECSISVPVLGQFDISWRYWFPYSFISMACFT). Residues 216–236 (LASLNRSNCVLLGIYFIFDLI) form a helical membrane-spanning segment. At 237-243 (ELTKNRK) the chain is on the cytoplasmic side. The chain crosses the membrane as a helical span at residues 244–264 (FVKAICFPLLSGSLMFSALLY). Residues 265–318 (QQYYLPYKTFCPQRGEWCKSQLFSSIFITKTSLYSYIQSHYWGVGLLKYWTPNN) are Lumenal-facing. Residues 319-339 (IPNFLFAVPNIIILIYSSIYF) traverse the membrane as a helical segment. Residues 340–350 (SKIYPSYNLKA) lie on the Cytoplasmic side of the membrane. The helical transmembrane segment at 351 to 371 (LVWITRALVVIVCFFAHVQIL) threads the bilayer. Residues 372-409 (NRIASFLPLHLWYLADRLVKTSDPKKMENPKGDDKIVK) lie on the Lumenal side of the membrane. The chain crosses the membrane as a helical span at residues 410 to 430 (FYIYWLAFWIPLQTILFAAFL). Residues 431-433 (PPA) are Cytoplasmic-facing.

Belongs to the PIGV family. Part of the GPI mannosyltransferase 2 complex composed of GPI18 and PGA1.

The protein resides in the endoplasmic reticulum membrane. It functions in the pathway glycolipid biosynthesis; glycosylphosphatidylinositol-anchor biosynthesis. Its function is as follows. Mannosyltransferase involved in glycosylphosphatidylinositol-anchor biosynthesis. Responsible for the transfer of the second mannose to the glycosylphosphatidylinositol during GPI precursor assembly. This chain is GPI mannosyltransferase 2 (GPI18), found in Saccharomyces cerevisiae (strain ATCC 204508 / S288c) (Baker's yeast).